The primary structure comprises 92 residues: C-C motif chemokine 5 (92 aa).

An N-terminal signal peptide occupies residues 1–23 (MKVSTAAFAVLLTAAAFCTPASA). Intrachain disulfides connect C33/C57 and C34/C73.

Belongs to the intercrine beta (chemokine CC) family.

The protein localises to the secreted. Its function is as follows. Chemoattractant for blood monocytes, memory T-helper cells and eosinophils. Causes the release of histamine from basophils and activates eosinophils. May activate several chemokine receptors including CCR1, CCR3, CCR4 and CCR5. May also be an agonist of the G protein-coupled receptor GPR75. Together with GPR75, may play a role in neuron survival through activation of a downstream signaling pathway involving the PI3, Akt and MAP kinases. By activating GPR75 may also play a role in insulin secretion by islet cells. In Felis catus (Cat), this protein is C-C motif chemokine 5 (CCL5).